Reading from the N-terminus, the 365-residue chain is Peptide chain release factor 2 (365 aa).

Gln252 is modified (N5-methylglutamine).

Belongs to the prokaryotic/mitochondrial release factor family. Methylated by PrmC. Methylation increases the termination efficiency of RF2.

It localises to the cytoplasm. In terms of biological role, peptide chain release factor 2 directs the termination of translation in response to the peptide chain termination codons UGA and UAA. The protein is Peptide chain release factor 2 of Tolumonas auensis (strain DSM 9187 / NBRC 110442 / TA 4).